The primary structure comprises 685 residues: Cilia- and flagella-associated protein 36 (685 aa).

The tract at residues 1–20 (MLRRFSKKNKNPEGGSDDAS) is disordered. Residues 197–242 (SEELEMMAQNSRIQREALEQEIRKEEILLQQALDEGARAQNQNQNQ) adopt a coiled-coil conformation. Positions 287 to 310 (TGTMTSSTGVSVGTLTNTGVSSGT) are enriched in low complexity. Positions 287 to 573 (TGTMTSSTGV…LRGNKYDGDV (287 aa)) are disordered. A compositionally biased stretch (basic and acidic residues) spans 363 to 372 (EAEKSKRERP). The segment covering 410-434 (GTTSKKSIATVTASPEMSSKTTQME) has biased composition (polar residues). Composition is skewed to basic and acidic residues over residues 439 to 456 (GEGKKRPETSKGANERKY) and 508 to 557 (HEPR…ESKP).

This sequence belongs to the CFAP36 family. In terms of tissue distribution, expressed in amphid and phasmid ciliated neurons.

The protein localises to the cell projection. It localises to the cilium. The protein resides in the cytoplasm. Its subcellular location is the cytoskeleton. It is found in the cilium axoneme. This is Cilia- and flagella-associated protein 36 from Caenorhabditis elegans.